A 347-amino-acid polypeptide reads, in one-letter code: MDENKQKALAAALGQIEKQFGKGSIMRLGDNRAMDVETISTGSLSLDIALGAGGLPMGRIVEIYGPESSGKTTLTLELIAAAQREGKTCAFIDAEHALDPVYAKKLGVDIDALLVSQPDTGEQALEICDALARSGAIDVMVVDSVAALTPKAEIEGEMGDSHMGLQARMLSQAMRKLTGNLKQSNCMCIFINQIRMKIGVMFGNPETTTGGNALKFYASVRLDIRRTGAIKEGDEVVGNETRIKVVKNKIAAPFKEANTQIMYGQGFNREGELIDLGVKHKLVEKAGAWYSYNGDKIGQGKANACNYLREHPEIAKTIDTKLREMLLSPAQPEAPAAGEKPEQEEEF.

65–72 (GPESSGKT) contacts ATP. The tract at residues 328–347 (SPAQPEAPAAGEKPEQEEEF) is disordered.

The protein belongs to the RecA family.

The protein resides in the cytoplasm. Functionally, can catalyze the hydrolysis of ATP in the presence of single-stranded DNA, the ATP-dependent uptake of single-stranded DNA by duplex DNA, and the ATP-dependent hybridization of homologous single-stranded DNAs. It interacts with LexA causing its activation and leading to its autocatalytic cleavage. This Vibrio parahaemolyticus serotype O3:K6 (strain RIMD 2210633) protein is Protein RecA.